Here is a 178-residue protein sequence, read N- to C-terminus: ATP synthase subunit delta (178 aa).

The protein belongs to the ATPase delta chain family. In terms of assembly, F-type ATPases have 2 components, F(1) - the catalytic core - and F(0) - the membrane proton channel. F(1) has five subunits: alpha(3), beta(3), gamma(1), delta(1), epsilon(1). F(0) has three main subunits: a(1), b(2) and c(10-14). The alpha and beta chains form an alternating ring which encloses part of the gamma chain. F(1) is attached to F(0) by a central stalk formed by the gamma and epsilon chains, while a peripheral stalk is formed by the delta and b chains.

The protein resides in the cell inner membrane. Functionally, f(1)F(0) ATP synthase produces ATP from ADP in the presence of a proton or sodium gradient. F-type ATPases consist of two structural domains, F(1) containing the extramembraneous catalytic core and F(0) containing the membrane proton channel, linked together by a central stalk and a peripheral stalk. During catalysis, ATP synthesis in the catalytic domain of F(1) is coupled via a rotary mechanism of the central stalk subunits to proton translocation. This protein is part of the stalk that links CF(0) to CF(1). It either transmits conformational changes from CF(0) to CF(1) or is implicated in proton conduction. In Alcanivorax borkumensis (strain ATCC 700651 / DSM 11573 / NCIMB 13689 / SK2), this protein is ATP synthase subunit delta.